The chain runs to 122 residues: Large ribosomal subunit protein uL18 (122 aa).

Belongs to the universal ribosomal protein uL18 family. Part of the 50S ribosomal subunit; part of the 5S rRNA/L5/L18/L25 subcomplex. Contacts the 5S and 23S rRNAs.

This is one of the proteins that bind and probably mediate the attachment of the 5S RNA into the large ribosomal subunit, where it forms part of the central protuberance. This Prochlorococcus marinus (strain MIT 9515) protein is Large ribosomal subunit protein uL18.